A 264-amino-acid polypeptide reads, in one-letter code: Thymidylate synthase (264 aa).

Arg-21 serves as a coordination point for dUMP. Residue His-51 coordinates (6R)-5,10-methylene-5,6,7,8-tetrahydrofolate. DUMP is bound at residue 126–127 (RR). Residue Cys-146 is the Nucleophile of the active site. DUMP contacts are provided by residues 166–169 (RSAD), Asn-177, and 207–209 (HIY). Residue Asp-169 coordinates (6R)-5,10-methylene-5,6,7,8-tetrahydrofolate. Ser-263 serves as a coordination point for (6R)-5,10-methylene-5,6,7,8-tetrahydrofolate.

The protein belongs to the thymidylate synthase family. Bacterial-type ThyA subfamily. Homodimer.

It is found in the cytoplasm. The enzyme catalyses dUMP + (6R)-5,10-methylene-5,6,7,8-tetrahydrofolate = 7,8-dihydrofolate + dTMP. The protein operates within pyrimidine metabolism; dTTP biosynthesis. In terms of biological role, catalyzes the reductive methylation of 2'-deoxyuridine-5'-monophosphate (dUMP) to 2'-deoxythymidine-5'-monophosphate (dTMP) while utilizing 5,10-methylenetetrahydrofolate (mTHF) as the methyl donor and reductant in the reaction, yielding dihydrofolate (DHF) as a by-product. This enzymatic reaction provides an intracellular de novo source of dTMP, an essential precursor for DNA biosynthesis. The sequence is that of Thymidylate synthase from Phocaeicola vulgatus (strain ATCC 8482 / DSM 1447 / JCM 5826 / CCUG 4940 / NBRC 14291 / NCTC 11154) (Bacteroides vulgatus).